A 428-amino-acid polypeptide reads, in one-letter code: Septin homolog spn7 (428 aa).

The Septin-type G domain occupies 15–290 (KGKKLRIMVA…ENYRTEKLSN (276 aa)). Positions 25-32 (GSSYTSYQ) are G1 motif. GTP is bound by residues 25-32 (GSSYTSYQ), G86, 166-174 (NSNAFTEEE), and G224. Positions 83 to 86 (EVNG) are G3 motif. Residues 165–168 (GNSN) form a G4 motif region. Disordered regions lie at residues 287 to 345 (KLSN…SEEL) and 387 to 414 (KEFP…KKMD). Residues 290–307 (NDSPSNTSLSLQKQNSIV) show a composition bias toward polar residues. The segment covering 309–325 (NEDKRSVNGSERTETRS) has biased composition (basic and acidic residues). Polar residues-rich tracts occupy residues 326-339 (SIDQ…VSDS) and 392-405 (RTTS…NNTT).

It belongs to the TRAFAC class TrmE-Era-EngA-EngB-Septin-like GTPase superfamily. Septin GTPase family. Component of the sporulation-specific septin complex composed of at least spn2, spn5, spn6 and spn7.

It localises to the cytoplasm. It is found in the nucleus. The protein resides in the forespore membrane. Functionally, septin-like protein involved in the correct orientation of forespore membrane extension during sporulation. Binds phosphatidylinositol 4-phosphate. The chain is Septin homolog spn7 (spn7) from Schizosaccharomyces pombe (strain 972 / ATCC 24843) (Fission yeast).